The following is a 93-amino-acid chain: Large ribosomal subunit protein uL23cz/uL23cy (93 aa).

This sequence belongs to the universal ribosomal protein uL23 family. Part of the 50S ribosomal subunit.

Its subcellular location is the plastid. It is found in the chloroplast. Binds to 23S rRNA. The sequence is that of Large ribosomal subunit protein uL23cz/uL23cy (rpl23-A) from Oenothera elata subsp. hookeri (Hooker's evening primrose).